The following is a 329-amino-acid chain: MGKLIDIPIVVESGQKYKTSQGVTAIKDGIKSSGQDHERLPKPKWLRIVNHTTPAYSQVKEQVQKHRLATVCEEAKCPNISECWSHGTATIMLMGAVCTRACRFCSVDTGNPHGWLDAEEPENTAETVALMNLDYVVLTSVNRDDLPDGGANHYAKTIRAIKKRSPRTKVEALTPDFQGSERDVAVLLDSGVDVFAQNVETVERLTHPVRDNRAGYQQTLNVLAFAKKYRPDVLTKTSLMLGLGETDEEIIQTMDDLRTHHVDILTLGQYLQPTKNHLPIARYVTPETFSELRQIGLKKGFFEVASGPLVRSSYRADRVFKRDNLGLDV.

Residues C72, C77, C83, C98, C102, C105, and S313 each coordinate [4Fe-4S] cluster. In terms of domain architecture, Radical SAM core spans 83–303; that stretch reads CWSHGTATIM…QIGLKKGFFE (221 aa).

It belongs to the radical SAM superfamily. Lipoyl synthase family. The cofactor is [4Fe-4S] cluster.

Its subcellular location is the cytoplasm. The enzyme catalyses [[Fe-S] cluster scaffold protein carrying a second [4Fe-4S](2+) cluster] + N(6)-octanoyl-L-lysyl-[protein] + 2 oxidized [2Fe-2S]-[ferredoxin] + 2 S-adenosyl-L-methionine + 4 H(+) = [[Fe-S] cluster scaffold protein] + N(6)-[(R)-dihydrolipoyl]-L-lysyl-[protein] + 4 Fe(3+) + 2 hydrogen sulfide + 2 5'-deoxyadenosine + 2 L-methionine + 2 reduced [2Fe-2S]-[ferredoxin]. It participates in protein modification; protein lipoylation via endogenous pathway; protein N(6)-(lipoyl)lysine from octanoyl-[acyl-carrier-protein]: step 2/2. In terms of biological role, catalyzes the radical-mediated insertion of two sulfur atoms into the C-6 and C-8 positions of the octanoyl moiety bound to the lipoyl domains of lipoate-dependent enzymes, thereby converting the octanoylated domains into lipoylated derivatives. This Legionella pneumophila (strain Paris) protein is Lipoyl synthase.